Reading from the N-terminus, the 232-residue chain is Phosphatidylserine decarboxylase proenzyme (232 aa).

Residue serine 190 is the Schiff-base intermediate with substrate; via pyruvic acid of the active site. Pyruvic acid (Ser); by autocatalysis is present on serine 190.

The protein belongs to the phosphatidylserine decarboxylase family. PSD-A subfamily. Heterodimer of a large membrane-associated beta subunit and a small pyruvoyl-containing alpha subunit. Requires pyruvate as cofactor. Is synthesized initially as an inactive proenzyme. Formation of the active enzyme involves a self-maturation process in which the active site pyruvoyl group is generated from an internal serine residue via an autocatalytic post-translational modification. Two non-identical subunits are generated from the proenzyme in this reaction, and the pyruvate is formed at the N-terminus of the alpha chain, which is derived from the carboxyl end of the proenzyme. The post-translation cleavage follows an unusual pathway, termed non-hydrolytic serinolysis, in which the side chain hydroxyl group of the serine supplies its oxygen atom to form the C-terminus of the beta chain, while the remainder of the serine residue undergoes an oxidative deamination to produce ammonia and the pyruvoyl prosthetic group on the alpha chain.

Its subcellular location is the cell membrane. The enzyme catalyses a 1,2-diacyl-sn-glycero-3-phospho-L-serine + H(+) = a 1,2-diacyl-sn-glycero-3-phosphoethanolamine + CO2. Its pathway is phospholipid metabolism; phosphatidylethanolamine biosynthesis; phosphatidylethanolamine from CDP-diacylglycerol: step 2/2. In terms of biological role, catalyzes the formation of phosphatidylethanolamine (PtdEtn) from phosphatidylserine (PtdSer). In Agrobacterium fabrum (strain C58 / ATCC 33970) (Agrobacterium tumefaciens (strain C58)), this protein is Phosphatidylserine decarboxylase proenzyme.